A 593-amino-acid chain; its full sequence is DNA mismatch repair protein MutL (593 aa).

The protein belongs to the DNA mismatch repair MutL/HexB family.

Functionally, this protein is involved in the repair of mismatches in DNA. It is required for dam-dependent methyl-directed DNA mismatch repair. May act as a 'molecular matchmaker', a protein that promotes the formation of a stable complex between two or more DNA-binding proteins in an ATP-dependent manner without itself being part of a final effector complex. The polypeptide is DNA mismatch repair protein MutL (Leptospira interrogans serogroup Icterohaemorrhagiae serovar copenhageni (strain Fiocruz L1-130)).